Here is a 417-residue protein sequence, read N- to C-terminus: Sterile alpha motif domain-containing protein 14 (417 aa).

Disordered stretches follow at residues Leu-37–Ala-299 and Ala-388–Ser-417. The segment covering Lys-40–Ser-49 has biased composition (basic residues). Ser-84 and Ser-108 each carry phosphoserine. Low complexity predominate over residues Ala-135–Ser-153. A compositionally biased stretch (basic and acidic residues) spans Arg-160–Ser-173. Ser-173 and Ser-179 each carry phosphoserine. Composition is skewed to low complexity over residues Ser-244–Ser-260 and Ser-276–Pro-295. A Phosphoserine modification is found at Ser-279. Thr-283 carries the phosphothreonine modification. One can recognise an SAM domain in the interval Trp-326–Ala-389. Positions Ala-377 to Ser-417 form a coiled coil. The span at Ala-390–Ser-417 shows a compositional bias: basic and acidic residues.

In Homo sapiens (Human), this protein is Sterile alpha motif domain-containing protein 14 (SAMD14).